Consider the following 224-residue polypeptide: uncharacterized protein (224 aa).

The first 16 residues, 1–16, serve as a signal peptide directing secretion; it reads MKILYSFLLLPFFSCA.

This is an uncharacterized protein from Escherichia coli.